The primary structure comprises 285 residues: Bifunctional protein FolD (285 aa).

Residues Gly-166–Ser-168, Ser-191, and Ile-232 each bind NADP(+).

This sequence belongs to the tetrahydrofolate dehydrogenase/cyclohydrolase family. Homodimer.

It catalyses the reaction (6R)-5,10-methylene-5,6,7,8-tetrahydrofolate + NADP(+) = (6R)-5,10-methenyltetrahydrofolate + NADPH. It carries out the reaction (6R)-5,10-methenyltetrahydrofolate + H2O = (6R)-10-formyltetrahydrofolate + H(+). It participates in one-carbon metabolism; tetrahydrofolate interconversion. Catalyzes the oxidation of 5,10-methylenetetrahydrofolate to 5,10-methenyltetrahydrofolate and then the hydrolysis of 5,10-methenyltetrahydrofolate to 10-formyltetrahydrofolate. This chain is Bifunctional protein FolD, found in Rickettsia typhi (strain ATCC VR-144 / Wilmington).